A 208-amino-acid polypeptide reads, in one-letter code: Outer-membrane lipoprotein carrier protein (208 aa).

Positions Met-1–Ala-22 are cleaved as a signal peptide.

The protein belongs to the LolA family. Monomer.

The protein localises to the periplasm. Its function is as follows. Participates in the translocation of lipoproteins from the inner membrane to the outer membrane. Only forms a complex with a lipoprotein if the residue after the N-terminal Cys is not an aspartate (The Asp acts as a targeting signal to indicate that the lipoprotein should stay in the inner membrane). This Shewanella halifaxensis (strain HAW-EB4) protein is Outer-membrane lipoprotein carrier protein.